A 361-amino-acid polypeptide reads, in one-letter code: tRNA-specific 2-thiouridylase MnmA (361 aa).

Residues glycine 11–serine 18 and methionine 37 each bind ATP. Cysteine 106 serves as the catalytic Nucleophile. The cysteines at positions 106 and 202 are disulfide-linked. Glycine 130 contributes to the ATP binding site. The tract at residues lysine 152 to glutamine 154 is interaction with tRNA. Catalysis depends on cysteine 202, which acts as the Cysteine persulfide intermediate. Positions arginine 308–tyrosine 309 are interaction with tRNA.

The protein belongs to the MnmA/TRMU family.

The protein localises to the cytoplasm. The catalysed reaction is S-sulfanyl-L-cysteinyl-[protein] + uridine(34) in tRNA + AH2 + ATP = 2-thiouridine(34) in tRNA + L-cysteinyl-[protein] + A + AMP + diphosphate + H(+). In terms of biological role, catalyzes the 2-thiolation of uridine at the wobble position (U34) of tRNA, leading to the formation of s(2)U34. The chain is tRNA-specific 2-thiouridylase MnmA from Clostridium botulinum (strain Eklund 17B / Type B).